The primary structure comprises 803 residues: Translation initiation factor IF-2 (803 aa).

2 disordered regions span residues 95-125 (PVVE…EKAE) and 138-209 (EVKE…KLEQ). Residues 111–121 (VPLTSDTTNLN) are compositionally biased toward polar residues. A compositionally biased stretch (basic and acidic residues) spans 138 to 155 (EVKEEAKKTPSEKKETPK). Residues 156–167 (KGPRKETRRSRK) are compositionally biased toward basic residues. Residues 168–188 (PDKEDKWEREELHMTKLVEER) show a composition bias toward basic and acidic residues. In terms of domain architecture, tr-type G spans 302–471 (PRAPVVTIMG…LLQAEVLELK (170 aa)). The G1 stretch occupies residues 311 to 318 (GHVDHGKT). 311–318 (GHVDHGKT) contacts GTP. Residues 336–340 (GITQH) are G2. Residues 357-360 (DTPG) are G3. Residues 357–361 (DTPGH) and 411–414 (NKID) each bind GTP. A G4 region spans residues 411–414 (NKID). A G5 region spans residues 447–449 (SAK).

The protein belongs to the TRAFAC class translation factor GTPase superfamily. Classic translation factor GTPase family. IF-2 subfamily.

Its subcellular location is the cytoplasm. In terms of biological role, one of the essential components for the initiation of protein synthesis. Protects formylmethionyl-tRNA from spontaneous hydrolysis and promotes its binding to the 30S ribosomal subunits. Also involved in the hydrolysis of GTP during the formation of the 70S ribosomal complex. This is Translation initiation factor IF-2 from Coxiella burnetii (strain CbuG_Q212) (Coxiella burnetii (strain Q212)).